A 316-amino-acid chain; its full sequence is WEB family protein At3g13190 (316 aa).

Coiled coils occupy residues 42–90, 119–195, and 233–266; these read WNKE…MIND, EEES…AEEH, and RDET…MAQE. The segment at 295–316 is disordered; it reads STKEVLKSKPRSSSKEGCLVKC.

The protein belongs to the WEB family.

The protein is WEB family protein At3g13190 of Arabidopsis thaliana (Mouse-ear cress).